The sequence spans 272 residues: Phosphate import ATP-binding protein PstB (272 aa).

The 242-residue stretch at 26-267 folds into the ABC transporter domain; it reads VAARNLNFYY…PADRRTQDYI (242 aa). ATP is bound at residue 58–65; that stretch reads GPSGCGKS.

Belongs to the ABC transporter superfamily. Phosphate importer (TC 3.A.1.7) family. The complex is composed of two ATP-binding proteins (PstB), two transmembrane proteins (PstC and PstA) and a solute-binding protein (PstS).

It localises to the cell inner membrane. It carries out the reaction phosphate(out) + ATP + H2O = ADP + 2 phosphate(in) + H(+). Part of the ABC transporter complex PstSACB involved in phosphate import. Responsible for energy coupling to the transport system. The polypeptide is Phosphate import ATP-binding protein PstB (Nitrobacter hamburgensis (strain DSM 10229 / NCIMB 13809 / X14)).